A 457-amino-acid polypeptide reads, in one-letter code: NADH-quinone oxidoreductase subunit N (457 aa).

14 helical membrane-spanning segments follow: residues 2–22, 25–45, 60–80, 92–112, 114–134, 149–169, 188–208, 222–242, 253–273, 283–303, 310–330, 353–373, 382–402, and 431–451; these read NAII…FIGL, LIYP…ACTF, NYSV…FILF, GDHY…VSFS, MSML…LAGS, FILG…IYGA, FFIG…AVPF, FITA…FYLM, YLSH…NIAA, LAFS…ILTI, FVYL…VQVV, AFVL…AGFF, VIHA…LISV, and VILA…DILL.

The protein belongs to the complex I subunit 2 family. As to quaternary structure, NDH-1 is composed of 14 different subunits. Subunits NuoA, H, J, K, L, M, N constitute the membrane sector of the complex.

It is found in the cell inner membrane. It carries out the reaction a quinone + NADH + 5 H(+)(in) = a quinol + NAD(+) + 4 H(+)(out). NDH-1 shuttles electrons from NADH, via FMN and iron-sulfur (Fe-S) centers, to quinones in the respiratory chain. The immediate electron acceptor for the enzyme in this species is believed to be a menaquinone. Couples the redox reaction to proton translocation (for every two electrons transferred, four hydrogen ions are translocated across the cytoplasmic membrane), and thus conserves the redox energy in a proton gradient. The chain is NADH-quinone oxidoreductase subunit N from Cytophaga hutchinsonii (strain ATCC 33406 / DSM 1761 / CIP 103989 / NBRC 15051 / NCIMB 9469 / D465).